The sequence spans 120 residues: GATA transcription factor 23 (120 aa).

The segment at 22 to 76 (KGTIRCCSECKTTKTPMWRGGPTGPKSLCNACGIRHRKQRRSELLGIHIIRSHKS) adopts a GATA-type zinc-finger fold.

Belongs to the type IV zinc-finger family. Class B subfamily.

Its subcellular location is the nucleus. In terms of biological role, transcriptional regulator that specifically binds 5'-GATA-3' or 5'-GAT-3' motifs within gene promoters. The sequence is that of GATA transcription factor 23 (GATA23) from Arabidopsis thaliana (Mouse-ear cress).